The chain runs to 217 residues: ATP phosphoribosyltransferase (217 aa).

The protein belongs to the ATP phosphoribosyltransferase family. Short subfamily. Heteromultimer composed of HisG and HisZ subunits.

Its subcellular location is the cytoplasm. It catalyses the reaction 1-(5-phospho-beta-D-ribosyl)-ATP + diphosphate = 5-phospho-alpha-D-ribose 1-diphosphate + ATP. The protein operates within amino-acid biosynthesis; L-histidine biosynthesis; L-histidine from 5-phospho-alpha-D-ribose 1-diphosphate: step 1/9. Catalyzes the condensation of ATP and 5-phosphoribose 1-diphosphate to form N'-(5'-phosphoribosyl)-ATP (PR-ATP). Has a crucial role in the pathway because the rate of histidine biosynthesis seems to be controlled primarily by regulation of HisG enzymatic activity. The chain is ATP phosphoribosyltransferase from Parasynechococcus marenigrum (strain WH8102).